The following is a 1648-amino-acid chain: Homeostatic regulator of DAG (1648 aa).

The 97-residue stretch at 5-101 folds into the DMAP1-binding domain; that stretch reads IPPTLPLDLQ…YRVTTINSTS (97 aa). N-linked (GlcNAc...) asparagine glycans are attached at residues Asn-28, Asn-71, and Asn-98. Disordered stretches follow at residues 52–73 and 96–130; these read PYTP…RNTS and TINS…ENGS. A compositionally biased stretch (basic residues) spans 60-71; sequence NSRKSKHLHRRN. 2 stretches are compositionally biased toward polar residues: residues 96 to 105 and 113 to 128; these read TINSTSANNT and YTAS…SDEN. Ser-99 carries the phosphoserine modification. N-linked (GlcNAc...) asparagine glycans are attached at residues Asn-128, Asn-151, and Asn-209. The fatty acyl-AMP ligase-like domain 1 stretch occupies residues 158 to 893; the sequence is AMTDSLPLIL…VEKKFLNNDL (736 aa). Residues 228–248 traverse the membrane as a helical segment; sequence VIEFTIALLGCFISGMAAVPV. 5 N-linked (GlcNAc...) asparagine glycosylation sites follow: Asn-288, Asn-328, Asn-575, Asn-644, and Asn-730. Phosphoserine is present on Ser-751. 4 N-linked (GlcNAc...) asparagine glycosylation sites follow: Asn-881, Asn-917, Asn-995, and Asn-1009. Positions 950-1648 are fatty acyl-AMP ligase-like domain 2; that stretch reads VKPKLALQCS…LLSDYEKDNI (699 aa). The chain crosses the membrane as a helical span at residues 1061 to 1081; the sequence is YVAMIMACLYCNLLVIPLPSV. Asn-1198 carries an N-linked (GlcNAc...) asparagine glycan. The helical transmembrane segment at 1224–1244 threads the bilayer; that stretch reads GLGFMFSCLLGIYTGASTCLF. 8 N-linked (GlcNAc...) asparagine glycosylation sites follow: Asn-1301, Asn-1302, Asn-1447, Asn-1472, Asn-1488, Asn-1565, Asn-1597, and Asn-1634.

It is found in the vacuole membrane. The protein resides in the mitochondrion membrane. Its function is as follows. Homeostatic regulator of a chemically distinct subset of diacylglycerols (DAGs) with C36 chain length that prevents the toxic accumulation of these specific DAGs in the logarithmic growth phase, which otherwise leads to endoplasmic reticulum stress. Maintains the basal level of DAG subspecies by directly facilitating DAG to triacylglycerol (TAG) conversion process, possibly via adenylation activity of its FLD domains. Does not affect the abundant DAG species (representing over 90% of total DAG pool), comprised of C32 and C34 chain lengths. Required for vacuole fusion-mediated osmoadaptation. This is Homeostatic regulator of DAG from Saccharomyces cerevisiae (strain ATCC 204508 / S288c) (Baker's yeast).